A 347-amino-acid polypeptide reads, in one-letter code: Probable magnetosome protein Mms36 (347 aa).

Residues Val-25–Ala-45 form a helical membrane-spanning segment.

The protein resides in the magnetosome membrane. The 4 genes of this operon collectively influence magnetosome size and number. The chain is Probable magnetosome protein Mms36 from Magnetospirillum gryphiswaldense (strain DSM 6361 / JCM 21280 / NBRC 15271 / MSR-1).